Consider the following 363-residue polypeptide: Fructose-bisphosphate aldolase C (363 aa).

Y5 carries the phosphotyrosine modification. Phosphoserine is present on residues S36, S39, and S45. Residue R56 coordinates substrate. Residue K111 is modified to N6-acetyllysine. Residue K147 participates in substrate binding. E188 functions as the Proton acceptor in the catalytic mechanism. Residue K230 is the Schiff-base intermediate with dihydroxyacetone-P of the active site.

Belongs to the class I fructose-bisphosphate aldolase family. As to quaternary structure, homotetramer. Interacts with ATP6V1E1. High expression in the adult brain.

The enzyme catalyses beta-D-fructose 1,6-bisphosphate = D-glyceraldehyde 3-phosphate + dihydroxyacetone phosphate. The protein operates within carbohydrate degradation; glycolysis; D-glyceraldehyde 3-phosphate and glycerone phosphate from D-glucose: step 4/4. This chain is Fructose-bisphosphate aldolase C (Aldoc), found in Rattus norvegicus (Rat).